The sequence spans 20 residues: 7.2 kDa cytotoxin RVV-7 (20 aa).

As to quaternary structure, monomer. Homodimerizes during storage at 30 degrees Celsius (observed after 3 days). In terms of tissue distribution, expressed by the venom gland.

Its subcellular location is the secreted. It localises to the target cell membrane. Functionally, this three-finger cytotoxin shows cytotoxicity and direct nephrotoxicity. The cytotoxicity has been observed on B16F10 melanoma cells (EC(50)=2.56 uM) and on kidney proximal tubular epithelium LLCPK1 cells (EC(50)=4.79 uM); it is due to necrotic cell death and not to apoptosis. Direct nephrotoxicity has been deduced from binding to LLCPK1 cell line and to kidney membranes. In addition, after intravenous injection into mice tail vein, the toxin principally accumulates in kidney, but only minimally in blood, liver and brain. This Daboia russelii (Russel's viper) protein is 7.2 kDa cytotoxin RVV-7.